The chain runs to 118 residues: Large ribosomal subunit protein bL20 (118 aa).

This sequence belongs to the bacterial ribosomal protein bL20 family.

Functionally, binds directly to 23S ribosomal RNA and is necessary for the in vitro assembly process of the 50S ribosomal subunit. It is not involved in the protein synthesizing functions of that subunit. In Desulfotalea psychrophila (strain LSv54 / DSM 12343), this protein is Large ribosomal subunit protein bL20.